The following is a 370-amino-acid chain: 3-dehydroquinate synthase (370 aa).

NAD(+)-binding positions include 112–116 (GVIGD), 136–137 (TT), Lys149, Lys158, and 176–179 (TLAT). Zn(2+)-binding residues include Glu191, His254, and His276.

Belongs to the sugar phosphate cyclases superfamily. Dehydroquinate synthase family. It depends on Co(2+) as a cofactor. Zn(2+) serves as cofactor. NAD(+) is required as a cofactor.

Its subcellular location is the cytoplasm. The enzyme catalyses 7-phospho-2-dehydro-3-deoxy-D-arabino-heptonate = 3-dehydroquinate + phosphate. The protein operates within metabolic intermediate biosynthesis; chorismate biosynthesis; chorismate from D-erythrose 4-phosphate and phosphoenolpyruvate: step 2/7. Its function is as follows. Catalyzes the conversion of 3-deoxy-D-arabino-heptulosonate 7-phosphate (DAHP) to dehydroquinate (DHQ). This Xylella fastidiosa (strain M23) protein is 3-dehydroquinate synthase.